The sequence spans 262 residues: Aconitate isomerase (262 aa).

Residues 1 to 22 form the signal peptide; sequence MFPRLPTLALGALLLASTPLLA.

Monomer.

It carries out the reaction trans-aconitate = cis-aconitate. Activated more than 1.5 fold by Ca(2+), Mg(2+), Mn(2+), Ni(2+), Fe(2+), DDT and 1,10-phenanthroline. Strongly inhibited by Ag(+) and Hg(+). Inhibited by addition of 20% (v/v) glycerol. No effect by addition of NADH or NADPH. In terms of biological role, involved in assimilation of trans-aconitic acid. Preference for cis-aconitic acid is 14-fold higher than for trans-aconitic acid. Not active on intermediates of tricarboxylic acid (TCA) cycle including citric acid, succinic acid, fumaric acid, and 2-oxoglutaric acid or on other dicarboxilic acids including itaconic acid, formic acid, citraconic acid or maleic acid. The protein is Aconitate isomerase of Pseudomonas sp.